Consider the following 80-residue polypeptide: Diphthamide biosynthesis protein 3 (80 aa).

In terms of domain architecture, DPH-type MB spans 4 to 60 (FHDEVEIEDFEFDEEKDVYHYPCPCGDRFEIPREMLEMGEDVAQCPSCSLLIRVIYD). Residues Cys26, Cys28, Cys48, and Cys51 each contribute to the Fe cation site.

This sequence belongs to the DPH3 family. In terms of assembly, component of the 2-(3-amino-3-carboxypropyl)histidine synthase complex composed of dph-1, dph-2, dph-3 and a NADH-dependent reductase. Requires Fe(2+) as cofactor.

It carries out the reaction [3Fe-4S](1+)-[protein] + Fe(2+)-[Dph3] = [3Fe-4S](0)-[protein] + Fe(3+)-[Dph3]. It catalyses the reaction 2 [3Fe-4S](0)-[protein] + 2 Fe(2+)-[Dph3] + NADH = 2 [4Fe-4S](1+)-[protein] + 2 [Dph3] + NAD(+) + H(+). Its pathway is protein modification; peptidyl-diphthamide biosynthesis. In terms of biological role, required for the first step of diphthamide biosynthesis, a post-translational modification of histidine which occurs in elongation factor 2. Dph-1 and dph-2 transfer a 3-amino-3-carboxypropyl (ACP) group from S-adenosyl-L-methionine (SAM) to a histidine residue, the reaction is assisted by a reduction system comprising dph-3 and a NADH-dependent reductase. Acts as an electron donor to reduce the Fe-S cluster in dph1-dph2 keeping the [4Fe-4S] clusters in the active and reduced state. Restores iron to dph-1-dph-2 iron-sulfur clusters which have degraded from [4Fe-4S] to [3Fe-4S] by donating an iron atom to reform [4Fe-4S] clusters, in a manner dependent on the presence of elongation factor 2 and SAM. Associates with the elongator complex and is required for tRNA Wobble base modifications mediated by the elongator complex. The elongator complex is required for multiple tRNA modifications, including mcm5U (5-methoxycarbonylmethyl uridine), mcm5s 2U (5-methoxycarbonylmethyl-2-thiouridine), and ncm5U (5-carbamoylmethyl uridine). This is Diphthamide biosynthesis protein 3 from Caenorhabditis elegans.